A 352-amino-acid chain; its full sequence is Molybdenum import ATP-binding protein ModC (352 aa).

An ABC transporter domain is found at methionine 1–glutamate 229. Residue glycine 31–threonine 38 coordinates ATP. The 64-residue stretch at glutamine 289–alanine 352 folds into the Mop domain.

This sequence belongs to the ABC transporter superfamily. Molybdate importer (TC 3.A.1.8) family. In terms of assembly, the complex is composed of two ATP-binding proteins (ModC), two transmembrane proteins (ModB) and a solute-binding protein (ModA).

The protein localises to the cell inner membrane. It carries out the reaction molybdate(out) + ATP + H2O = molybdate(in) + ADP + phosphate + H(+). Part of the ABC transporter complex ModABC involved in molybdenum import. Responsible for energy coupling to the transport system. In Escherichia coli O6:K15:H31 (strain 536 / UPEC), this protein is Molybdenum import ATP-binding protein ModC.